Reading from the N-terminus, the 220-residue chain is U1 small nuclear ribonucleoprotein C (220 aa).

A Matrin-type zinc finger spans residues 4–36; that stretch reads FFCDYCDVYLTHDSISVRKAHNSGRNHLRNVVD. Residues 197–220 form a disordered region; that stretch reads PLGGFPAGAPLPGAPPGYGPPGAK. The span at 208-220 shows a compositional bias: pro residues; that stretch reads PGAPPGYGPPGAK.

The protein belongs to the U1 small nuclear ribonucleoprotein C family. U1 snRNP is composed of the 7 core Sm proteins B/B', D1, D2, D3, E, F and G that assemble in a heptameric protein ring on the Sm site of the small nuclear RNA to form the core snRNP, and at least 3 U1 snRNP-specific proteins U1-70K, U1-A and U1-C. U1-C interacts with U1 snRNA and the 5' splice-site region of the pre-mRNA.

The protein resides in the nucleus. Functionally, component of the spliceosomal U1 snRNP, which is essential for recognition of the pre-mRNA 5' splice-site and the subsequent assembly of the spliceosome. U1-C is directly involved in initial 5' splice-site recognition for both constitutive and regulated alternative splicing. The interaction with the 5' splice-site seems to precede base-pairing between the pre-mRNA and the U1 snRNA. Stimulates commitment or early (E) complex formation by stabilizing the base pairing of the 5' end of the U1 snRNA and the 5' splice-site region. The chain is U1 small nuclear ribonucleoprotein C from Tuber melanosporum (strain Mel28) (Perigord black truffle).